Reading from the N-terminus, the 218-residue chain is Small ribosomal subunit protein uS3c (218 aa).

The KH type-2 domain occupies 47 to 118 (IRRHMRSSSN…KLNIAIVKVA (72 aa)).

This sequence belongs to the universal ribosomal protein uS3 family. In terms of assembly, part of the 30S ribosomal subunit.

It is found in the plastid. The protein resides in the chloroplast. This is Small ribosomal subunit protein uS3c (rps3) from Cycas taitungensis (Prince sago).